The chain runs to 466 residues: L-seryl-tRNA(Sec) selenium transferase (466 aa).

Residue K293 is modified to N6-(pyridoxal phosphate)lysine.

The protein belongs to the SelA family. It depends on pyridoxal 5'-phosphate as a cofactor.

Its subcellular location is the cytoplasm. The enzyme catalyses L-seryl-tRNA(Sec) + selenophosphate + H(+) = L-selenocysteinyl-tRNA(Sec) + phosphate. It functions in the pathway aminoacyl-tRNA biosynthesis; selenocysteinyl-tRNA(Sec) biosynthesis; selenocysteinyl-tRNA(Sec) from L-seryl-tRNA(Sec) (bacterial route): step 1/1. Converts seryl-tRNA(Sec) to selenocysteinyl-tRNA(Sec) required for selenoprotein biosynthesis. The chain is L-seryl-tRNA(Sec) selenium transferase from Desulfotalea psychrophila (strain LSv54 / DSM 12343).